A 416-amino-acid polypeptide reads, in one-letter code: Probable tRNA pseudouridine synthase D (416 aa).

Asp83 serves as the catalytic Nucleophile. Positions 158-379 (GFPNYFGYQR…PGGRRELLIR (222 aa)) constitute a TRUD domain.

This sequence belongs to the pseudouridine synthase TruD family.

The enzyme catalyses uridine(13) in tRNA = pseudouridine(13) in tRNA. Its function is as follows. Could be responsible for synthesis of pseudouridine from uracil-13 in transfer RNAs. This Thermococcus onnurineus (strain NA1) protein is Probable tRNA pseudouridine synthase D.